Consider the following 148-residue polypeptide: Sporulation inhibitor of replication protein SirA (148 aa).

This sequence belongs to the SirA family. As to quaternary structure, interacts with DnaA. Forms a 1:1 complex with domain I of DnaA.

The protein resides in the cytoplasm. Functionally, inhibits DNA replication initiation during sporulation, preventing overinitiation and thus enforcing diploidy; probably the main regulator of sporulation replication initiation under Spo0A control. During sporulation SirA prevents DnaA association with the replication origin to prevent excessive chromosome replication. Alternatively SirA binds to domain I of DnaA and prevent its interaction with DnaD, preventing DNA replication initiation. Upon ectopic expression during vegetative growth reduces chromosome copy number, leading to elongated cells with that can have a single nucleoid or be anucleate. Ectopic expression during vegetative growth blocks DnaA at oriC while blocking recruitment of DnaD to oriC. Plays a significant role during the onset of sporulation. This Bacillus subtilis (strain 168) protein is Sporulation inhibitor of replication protein SirA.